Consider the following 309-residue polypeptide: Spermatid maturation protein 1 (309 aa).

Residues 29–49 (VLLLLGLIICINISINIVTLL) form a helical membrane-spanning segment. Residues 209 to 231 (PPPPSPEAPSHKNGGEGAVPEAE) form a disordered region. Residues 259–285 (RIVYDARDMRRRLRELTREVEALSGCY) are a coiled coil.

The protein localises to the membrane. Its subcellular location is the cytoplasm. Functionally, required for proper cytoplasm removal during spermatogenesis. The polypeptide is Spermatid maturation protein 1 (SPEM1) (Homo sapiens (Human)).